We begin with the raw amino-acid sequence, 270 residues long: Phosphonoacetaldehyde hydrolase (270 aa).

Aspartate 11 acts as the Nucleophile in catalysis. Mg(2+) contacts are provided by aspartate 11 and alanine 13. The active-site Schiff-base intermediate with substrate is the lysine 53. Aspartate 187 is a binding site for Mg(2+).

This sequence belongs to the HAD-like hydrolase superfamily. PhnX family. As to quaternary structure, homodimer. Requires Mg(2+) as cofactor.

It carries out the reaction phosphonoacetaldehyde + H2O = acetaldehyde + phosphate + H(+). Involved in phosphonate degradation. In Salmonella choleraesuis (strain SC-B67), this protein is Phosphonoacetaldehyde hydrolase.